A 238-amino-acid chain; its full sequence is Ribonuclease PH (238 aa).

Phosphate is bound by residues Arg-86 and Gly-124–Arg-126.

The protein belongs to the RNase PH family. As to quaternary structure, homohexameric ring arranged as a trimer of dimers.

It carries out the reaction tRNA(n+1) + phosphate = tRNA(n) + a ribonucleoside 5'-diphosphate. Phosphorolytic 3'-5' exoribonuclease that plays an important role in tRNA 3'-end maturation. Removes nucleotide residues following the 3'-CCA terminus of tRNAs; can also add nucleotides to the ends of RNA molecules by using nucleoside diphosphates as substrates, but this may not be physiologically important. Probably plays a role in initiation of 16S rRNA degradation (leading to ribosome degradation) during starvation. This is Ribonuclease PH from Anaeromyxobacter sp. (strain Fw109-5).